A 789-amino-acid polypeptide reads, in one-letter code: DNA topoisomerase 4 subunit A (789 aa).

Residues 34–499 (LPDLRDGLKP…EKQKVQDSDF (466 aa)) enclose the Topo IIA-type catalytic domain. Residue Y122 is the O-(5'-phospho-DNA)-tyrosine intermediate of the active site.

It belongs to the type II topoisomerase GyrA/ParC subunit family. ParC type 2 subfamily. Heterotetramer composed of ParC and ParE.

Its subcellular location is the cell membrane. It catalyses the reaction ATP-dependent breakage, passage and rejoining of double-stranded DNA.. Its function is as follows. Topoisomerase IV is essential for chromosome segregation. It relaxes supercoiled DNA. Performs the decatenation events required during the replication of a circular DNA molecule. In Mycoplasma pneumoniae (strain ATCC 29342 / M129 / Subtype 1) (Mycoplasmoides pneumoniae), this protein is DNA topoisomerase 4 subunit A.